A 206-amino-acid chain; its full sequence is Small ribosomal subunit protein uS4 (206 aa).

Positions 96-156 (GRLDNVVYRM…EKSKNQLRIQ (61 aa)) constitute an S4 RNA-binding domain.

This sequence belongs to the universal ribosomal protein uS4 family. Part of the 30S ribosomal subunit. Contacts protein S5. The interaction surface between S4 and S5 is involved in control of translational fidelity.

Its function is as follows. One of the primary rRNA binding proteins, it binds directly to 16S rRNA where it nucleates assembly of the body of the 30S subunit. With S5 and S12 plays an important role in translational accuracy. The protein is Small ribosomal subunit protein uS4 of Saccharophagus degradans (strain 2-40 / ATCC 43961 / DSM 17024).